Reading from the N-terminus, the 205-residue chain is dITP/XTP pyrophosphatase (205 aa).

Residue 16–21 (TGNPGK) participates in substrate binding. Positions 48 and 77 each coordinate Mg(2+). Aspartate 77 functions as the Proton acceptor in the catalytic mechanism. Substrate contacts are provided by residues serine 78, 162-165 (FGYD), lysine 185, and 190-191 (HR).

This sequence belongs to the HAM1 NTPase family. Homodimer. Mg(2+) serves as cofactor.

It carries out the reaction XTP + H2O = XMP + diphosphate + H(+). It catalyses the reaction dITP + H2O = dIMP + diphosphate + H(+). The catalysed reaction is ITP + H2O = IMP + diphosphate + H(+). Functionally, pyrophosphatase that catalyzes the hydrolysis of nucleoside triphosphates to their monophosphate derivatives, with a high preference for the non-canonical purine nucleotides XTP (xanthosine triphosphate), dITP (deoxyinosine triphosphate) and ITP. Seems to function as a house-cleaning enzyme that removes non-canonical purine nucleotides from the nucleotide pool, thus preventing their incorporation into DNA/RNA and avoiding chromosomal lesions. The polypeptide is dITP/XTP pyrophosphatase (Erwinia tasmaniensis (strain DSM 17950 / CFBP 7177 / CIP 109463 / NCPPB 4357 / Et1/99)).